The chain runs to 456 residues: Exodeoxyribonuclease 7 large subunit (456 aa).

This sequence belongs to the XseA family. As to quaternary structure, heterooligomer composed of large and small subunits.

The protein localises to the cytoplasm. The enzyme catalyses Exonucleolytic cleavage in either 5'- to 3'- or 3'- to 5'-direction to yield nucleoside 5'-phosphates.. Bidirectionally degrades single-stranded DNA into large acid-insoluble oligonucleotides, which are then degraded further into small acid-soluble oligonucleotides. This is Exodeoxyribonuclease 7 large subunit from Escherichia coli (strain ATCC 8739 / DSM 1576 / NBRC 3972 / NCIMB 8545 / WDCM 00012 / Crooks).